A 127-amino-acid polypeptide reads, in one-letter code: Aspartate 1-decarboxylase (127 aa).

Catalysis depends on Ser25, which acts as the Schiff-base intermediate with substrate; via pyruvic acid. A Pyruvic acid (Ser) modification is found at Ser25. Residue Thr57 participates in substrate binding. Tyr58 acts as the Proton donor in catalysis. 73 to 75 lines the substrate pocket; it reads GAA.

Belongs to the PanD family. As to quaternary structure, heterooctamer of four alpha and four beta subunits. Pyruvate is required as a cofactor. In terms of processing, is synthesized initially as an inactive proenzyme, which is activated by self-cleavage at a specific serine bond to produce a beta-subunit with a hydroxyl group at its C-terminus and an alpha-subunit with a pyruvoyl group at its N-terminus.

It localises to the cytoplasm. It catalyses the reaction L-aspartate + H(+) = beta-alanine + CO2. Its pathway is cofactor biosynthesis; (R)-pantothenate biosynthesis; beta-alanine from L-aspartate: step 1/1. Functionally, catalyzes the pyruvoyl-dependent decarboxylation of aspartate to produce beta-alanine. The protein is Aspartate 1-decarboxylase of Bacillus pumilus (strain SAFR-032).